A 152-amino-acid polypeptide reads, in one-letter code: Transcriptional regulator MraZ (152 aa).

SpoVT-AbrB domains follow at residues 5–52 (ASAI…PVQE) and 81–124 (AHEC…DEAA).

Belongs to the MraZ family. In terms of assembly, forms oligomers.

It is found in the cytoplasm. Its subcellular location is the nucleoid. This is Transcriptional regulator MraZ from Shewanella piezotolerans (strain WP3 / JCM 13877).